The sequence spans 157 residues: 6,7-dimethyl-8-ribityllumazine synthase 1 (157 aa).

5-amino-6-(D-ribitylamino)uracil-binding positions include Phe22, 53–55, and 82–84; these read ALE and TVI. (2S)-2-hydroxy-3-oxobutyl phosphate is bound at residue 87–88; the sequence is ET. His90 (proton donor) is an active-site residue. Asn115 lines the 5-amino-6-(D-ribitylamino)uracil pocket. Residue His129 participates in (2S)-2-hydroxy-3-oxobutyl phosphate binding.

Belongs to the DMRL synthase family. In terms of assembly, homopentamer.

The catalysed reaction is (2S)-2-hydroxy-3-oxobutyl phosphate + 5-amino-6-(D-ribitylamino)uracil = 6,7-dimethyl-8-(1-D-ribityl)lumazine + phosphate + 2 H2O + H(+). It functions in the pathway cofactor biosynthesis; riboflavin biosynthesis; riboflavin from 2-hydroxy-3-oxobutyl phosphate and 5-amino-6-(D-ribitylamino)uracil: step 1/2. In terms of biological role, catalyzes the formation of 6,7-dimethyl-8-ribityllumazine by condensation of 5-amino-6-(D-ribitylamino)uracil with 3,4-dihydroxy-2-butanone 4-phosphate. This is the penultimate step in the biosynthesis of riboflavin. The protein is 6,7-dimethyl-8-ribityllumazine synthase 1 (ribH1) of Brucella abortus (strain 2308).